The following is a 156-amino-acid chain: Lipoprotein signal peptidase (156 aa).

A run of 2 helical transmembrane segments spans residues 57 to 77 (LFLI…LFIN) and 83 to 103 (ILKI…IDRI). Active-site residues include Asp110 and Asp129. A helical transmembrane segment spans residues 124–144 (IFNIADVLVSLGTILLIIFII).

This sequence belongs to the peptidase A8 family.

Its subcellular location is the cell membrane. The enzyme catalyses Release of signal peptides from bacterial membrane prolipoproteins. Hydrolyzes -Xaa-Yaa-Zaa-|-(S,diacylglyceryl)Cys-, in which Xaa is hydrophobic (preferably Leu), and Yaa (Ala or Ser) and Zaa (Gly or Ala) have small, neutral side chains.. The protein operates within protein modification; lipoprotein biosynthesis (signal peptide cleavage). Its function is as follows. This protein specifically catalyzes the removal of signal peptides from prolipoproteins. The polypeptide is Lipoprotein signal peptidase (Clostridium tetani (strain Massachusetts / E88)).